Reading from the N-terminus, the 319-residue chain is MVLRNLTAMAIYDQTFVYSSDDALAGMVVSMECLTGLFLLVAVIIGCFRIAALKSPFGILMINQNCAQLMACINSGSFSTLGVLLNIKPVLSISYLFGNFSIFLLPVILISFLLMSFNRFCACFFPLRYQNLFSSSMIRTFIVFNWLLSLVAGSYLVVVRECNFVFYHFGWLFAGSVSVKCGTLLSLYSISIQTVLSITIVGLDVVTLVALMAFRSKVYQSHSVEVRRRELSFSGQVIIQGAVFLCHGAWYDMGHAILPGNDDRWKFFFTTSFSSNLLHVFDPVVVFAFNKEFRRWLFRNFNVPTAQKRIVTVVSAHNT.

A run of 7 helical transmembrane segments spans residues 28 to 48 (VVSM…IGCF), 67 to 87 (AQLM…LLNI), 95 to 115 (YLFG…FLLM), 138 to 158 (IRTF…YLVV), 164 to 184 (FVFY…CGTL), 194 to 214 (TVLS…LMAF), and 267 to 287 (FFFT…VVVF).

Belongs to the G-protein coupled receptor 1 family. As to expression, expressed in ASI sensory neurons.

It is found in the cell membrane. The protein localises to the perikaryon. The protein resides in the cell projection. Its subcellular location is the cilium. Receptor for the ascaroside pheromone icas#9 which suppresses exploratory forgaging behavior. In response to ascaroside icas#9, may furthermore play a role in the expression of genes in the TGF-beta signaling pathway, such as daf-7, and in insulin signaling pathway, such as daf-28, which may in turn contribute to exploratory behavior. The protein is Serpentine receptor class X-43 of Caenorhabditis elegans.